We begin with the raw amino-acid sequence, 93 residues long: MPRSLKKGPFVDDHLLKKVDVQNEKNTKQVIKTWSRRSTIIPDFIGHTFAVHDGRKHVPVFVTESMVGHKLGEFAPTRTFKGHIKDDRKSKRR.

The protein belongs to the universal ribosomal protein uS19 family.

Protein S19 forms a complex with S13 that binds strongly to the 16S ribosomal RNA. The chain is Small ribosomal subunit protein uS19 from Mycobacterium marinum (strain ATCC BAA-535 / M).